The primary structure comprises 577 residues: Arginine--tRNA ligase (577 aa).

Positions 122-132 match the 'HIGH' region motif; the sequence is PNVAKEMHVGH.

It belongs to the class-I aminoacyl-tRNA synthetase family. In terms of assembly, monomer.

It is found in the cytoplasm. The catalysed reaction is tRNA(Arg) + L-arginine + ATP = L-arginyl-tRNA(Arg) + AMP + diphosphate. The protein is Arginine--tRNA ligase of Haemophilus influenzae (strain PittEE).